A 363-amino-acid chain; its full sequence is Flagellar P-ring protein (363 aa).

The N-terminal stretch at 1–20 (MKLKLILAVAMLAFSLPSQA) is a signal peptide.

Belongs to the FlgI family. As to quaternary structure, the basal body constitutes a major portion of the flagellar organelle and consists of four rings (L,P,S, and M) mounted on a central rod.

The protein resides in the periplasm. Its subcellular location is the bacterial flagellum basal body. Assembles around the rod to form the L-ring and probably protects the motor/basal body from shearing forces during rotation. This is Flagellar P-ring protein from Shewanella sp. (strain MR-7).